A 152-amino-acid polypeptide reads, in one-letter code: D-aminoacyl-tRNA deacylase (152 aa).

The short motif at 142–143 is the Gly-cisPro motif, important for rejection of L-amino acids element; the sequence is GP.

Belongs to the DTD family. In terms of assembly, homodimer.

It is found in the cytoplasm. The enzyme catalyses glycyl-tRNA(Ala) + H2O = tRNA(Ala) + glycine + H(+). It carries out the reaction a D-aminoacyl-tRNA + H2O = a tRNA + a D-alpha-amino acid + H(+). Its function is as follows. An aminoacyl-tRNA editing enzyme that deacylates mischarged D-aminoacyl-tRNAs. Also deacylates mischarged glycyl-tRNA(Ala), protecting cells against glycine mischarging by AlaRS. Acts via tRNA-based rather than protein-based catalysis; rejects L-amino acids rather than detecting D-amino acids in the active site. By recycling D-aminoacyl-tRNA to D-amino acids and free tRNA molecules, this enzyme counteracts the toxicity associated with the formation of D-aminoacyl-tRNA entities in vivo and helps enforce protein L-homochirality. In Burkholderia lata (strain ATCC 17760 / DSM 23089 / LMG 22485 / NCIMB 9086 / R18194 / 383), this protein is D-aminoacyl-tRNA deacylase.